The following is a 118-amino-acid chain: Small ribosomal subunit protein uS13 (118 aa).

The segment at 93–118 is disordered; it reads RGLPVRGQRTKTNARTRKGPRKPIRK.

Belongs to the universal ribosomal protein uS13 family. As to quaternary structure, part of the 30S ribosomal subunit. Forms a loose heterodimer with protein S19. Forms two bridges to the 50S subunit in the 70S ribosome.

Located at the top of the head of the 30S subunit, it contacts several helices of the 16S rRNA. In the 70S ribosome it contacts the 23S rRNA (bridge B1a) and protein L5 of the 50S subunit (bridge B1b), connecting the 2 subunits; these bridges are implicated in subunit movement. Contacts the tRNAs in the A and P-sites. The chain is Small ribosomal subunit protein uS13 from Pseudomonas fluorescens (strain Pf0-1).